We begin with the raw amino-acid sequence, 138 residues long: Large ribosomal subunit protein bL17 (138 aa).

This sequence belongs to the bacterial ribosomal protein bL17 family. As to quaternary structure, part of the 50S ribosomal subunit. Contacts protein L32.

This Jannaschia sp. (strain CCS1) protein is Large ribosomal subunit protein bL17.